Consider the following 546-residue polypeptide: Chaperonin GroEL (546 aa).

Residues 29 to 32 (TLGP), lysine 50, 86 to 90 (DGTTT), glycine 414, 477 to 479 (NAL), and aspartate 493 each bind ATP. The tract at residues 522–546 (KPEKDAPNPMAGMGGGGMGGMGGMM) is disordered. The segment covering 533-546 (GMGGGGMGGMGGMM) has biased composition (gly residues).

Belongs to the chaperonin (HSP60) family. As to quaternary structure, forms a cylinder of 14 subunits composed of two heptameric rings stacked back-to-back. Interacts with the co-chaperonin GroES.

The protein resides in the cytoplasm. It catalyses the reaction ATP + H2O + a folded polypeptide = ADP + phosphate + an unfolded polypeptide.. Functionally, together with its co-chaperonin GroES, plays an essential role in assisting protein folding. The GroEL-GroES system forms a nano-cage that allows encapsulation of the non-native substrate proteins and provides a physical environment optimized to promote and accelerate protein folding. The protein is Chaperonin GroEL of Leptospira borgpetersenii serovar Hardjo-bovis (strain JB197).